Reading from the N-terminus, the 297-residue chain is Putative S-adenosyl-L-methionine-dependent methyltransferase Mjls_1072 (297 aa).

Residues Asp-124 and 153–154 (DL) each bind S-adenosyl-L-methionine.

This sequence belongs to the UPF0677 family.

Its function is as follows. Exhibits S-adenosyl-L-methionine-dependent methyltransferase activity. This chain is Putative S-adenosyl-L-methionine-dependent methyltransferase Mjls_1072, found in Mycobacterium sp. (strain JLS).